The primary structure comprises 1026 residues: P3N-PIPO polyprotein (1026 aa).

In terms of domain architecture, Peptidase S30 spans 165–308 (RMSEASLQLF…KEQSNEIVHY (144 aa)). Catalysis depends on for P1 proteinase activity residues His-216, Asp-225, and Ser-259. The short motif at 360–363 (KITC) is the Involved in interaction with stylet and aphid transmission element. The Involved in virions binding and aphid transmission signature appears at 618–620 (PTK). A Peptidase C6 domain is found at 644–766 (MFIAKAGYCY…DSSMKTYLVG (123 aa)). Active-site for helper component proteinase activity residues include Cys-652 and His-725.

It belongs to the potyviridae P3N-PIPO polyprotein family. As to quaternary structure, interacts (via PIPO domain) with host PCaP1 protein; this interaction may help to anchor the movement complex to the plasma membrane from which the complex could move to the plasmodesmata. Potyviral RNA is expressed as two polyproteins which undergo post-translational proteolytic processing. Genome polyprotein is processed by NIa-pro, P1 and HC-pro proteinases resulting in the production of at least ten individual proteins. P3N-PIPO is cleaved by P1 and HC-pro proteinases resulting in the production of three individual proteins. The P1 proteinase and the HC-pro cleave only their respective C-termini autocatalytically.

The protein resides in the host cell junction. It is found in the host plasmodesma. It catalyses the reaction Hydrolyzes a Gly-|-Gly bond at its own C-terminus, commonly in the sequence -Tyr-Xaa-Val-Gly-|-Gly, in the processing of the potyviral polyprotein.. Its function is as follows. Required for aphid transmission and also has proteolytic activity. Only cleaves a Gly-Gly dipeptide at its own C-terminus. Interacts with virions and aphid stylets. Acts as a suppressor of RNA-mediated gene silencing, also known as post-transcriptional gene silencing (PTGS), a mechanism of plant viral defense that limits the accumulation of viral RNAs. May have RNA-binding activity. Functionally, allows efficient cell to cell propagation, by bypassing the host cell wall barrier. Transports viral genome to neighboring plant cells directly through plasmosdesmata, without any budding. The sequence is that of P3N-PIPO polyprotein from Prunus armeniaca (Apricot).